Here is a 118-residue protein sequence, read N- to C-terminus: MSDLDEIRRRRMEQLKQQQLAAQQQQGASLEQMQQEEQARQQFENQKKNALRQILTPEARQRLANLRLTKAELVNAIEMQLIQMAQAKRLQIPVTDATLKQILRETTSNKREIHITRK.

Over residues 15 to 44 the composition is skewed to low complexity; it reads LKQQQLAAQQQQGASLEQMQQEEQARQQFE. The segment at 15 to 45 is disordered; that stretch reads LKQQQLAAQQQQGASLEQMQQEEQARQQFEN.

The protein belongs to the PDCD5 family.

This is DNA-binding protein Msp_0595 from Methanosphaera stadtmanae (strain ATCC 43021 / DSM 3091 / JCM 11832 / MCB-3).